The sequence spans 207 residues: Histone H1-like protein HC2 (207 aa).

2 stretches are compositionally biased toward basic residues: residues 1 to 50 and 59 to 72; these read MLGV…KTVA and PAAKKTAAKKAPVR. The segment at 1-72 is disordered; sequence MLGVQKKRST…KTAAKKAPVR (72 aa). Repeat copies occupy residues 35–58, 71–94, and 113–136. Residues 35-136 are 3 X 24 AA repeats of V-R-K-V-A-A-K-K-T-V-A-R-K-T-V-A-K-K-A-V-A-A-R-K; sequence VRKVAAKKTV…VAKKAVAARK (102 aa).

Belongs to the histone H1/H5 family. HCT subfamily.

Its function is as follows. Might have a role in establishing the nucleoid structure of elementary bodies. The protein is Histone H1-like protein HC2 (hctB) of Chlamydia muridarum (strain MoPn / Nigg).